We begin with the raw amino-acid sequence, 283 residues long: Thymidylate synthase (283 aa).

DUMP is bound at residue Arg-22. Cys-160 functions as the Nucleophile in the catalytic mechanism. Residues 180 to 183 (RSCD), Asn-191, and 221 to 223 (HIY) each bind dUMP. Residue Asp-183 participates in (6R)-5,10-methylene-5,6,7,8-tetrahydrofolate binding. Ser-282 is a binding site for (6R)-5,10-methylene-5,6,7,8-tetrahydrofolate.

It belongs to the thymidylate synthase family. Bacterial-type ThyA subfamily. As to quaternary structure, homodimer.

It is found in the cytoplasm. It catalyses the reaction dUMP + (6R)-5,10-methylene-5,6,7,8-tetrahydrofolate = 7,8-dihydrofolate + dTMP. It functions in the pathway pyrimidine metabolism; dTTP biosynthesis. Its function is as follows. Catalyzes the reductive methylation of 2'-deoxyuridine-5'-monophosphate (dUMP) to 2'-deoxythymidine-5'-monophosphate (dTMP) while utilizing 5,10-methylenetetrahydrofolate (mTHF) as the methyl donor and reductant in the reaction, yielding dihydrofolate (DHF) as a by-product. This enzymatic reaction provides an intracellular de novo source of dTMP, an essential precursor for DNA biosynthesis. The chain is Thymidylate synthase from Marinomonas sp. (strain MWYL1).